The sequence spans 565 residues: Adenine deaminase (565 aa).

It belongs to the metallo-dependent hydrolases superfamily. Adenine deaminase family. Requires Mn(2+) as cofactor.

It catalyses the reaction adenine + H2O + H(+) = hypoxanthine + NH4(+). This is Adenine deaminase from Cereibacter sphaeroides (strain ATCC 17025 / ATH 2.4.3) (Rhodobacter sphaeroides).